A 219-amino-acid polypeptide reads, in one-letter code: Small ribosomal subunit protein uS3c (219 aa).

The KH type-2 domain maps to 43–120 (IQNYIQKNMQ…KINITITKIT (78 aa)).

The protein belongs to the universal ribosomal protein uS3 family. In terms of assembly, part of the 30S ribosomal subunit.

It is found in the plastid. The protein resides in the chloroplast. This is Small ribosomal subunit protein uS3c (rps3) from Oenothera elata subsp. hookeri (Hooker's evening primrose).